The sequence spans 538 residues: Cytochrome P450 monooxygenase xanG (538 aa).

A helical transmembrane segment spans residues 44–64; sequence MILYYLASIPLAIICYLAWYL. A glycan (N-linked (GlcNAc...) asparagine) is linked at Asn-378. Cys-489 lines the heme pocket.

The protein belongs to the cytochrome P450 family. Requires heme as cofactor.

The protein localises to the membrane. It functions in the pathway secondary metabolite biosynthesis. In terms of biological role, cytochrome P450 monooxygenase; part of the gene cluster that mediates the biosynthesis of the isocyanide xanthocillin and its derivatives. The first step of the pathway consists in the conversion of tyrosine into a vinyl-isonitrile intermediate by the isocyanide synthase xanB. Subsequent oxidative dimerization of this intermediate to form xanthocillin may involve the cytochrome P450 monooxygenase xanG, whose expression is coregulated with that of XanB. Xanthocillin can be further modified by the isonitrile hydratase-like protein xanA which introduces N-formyl groups and the methyltransferase xanE which introduces methyl groups, leading to the production of several derivatives including fumiformamide. Finally, fumiformamide can be subject to both oxidative and reductive cyclization to yield melanocins E and F, respectively. The sequence is that of Cytochrome P450 monooxygenase xanG from Aspergillus fumigatus (strain ATCC MYA-4609 / CBS 101355 / FGSC A1100 / Af293) (Neosartorya fumigata).